Consider the following 150-residue polypeptide: Ribonuclease H (150 aa).

In terms of domain architecture, RNase H type-1 spans 3 to 144 (GEDIVEIYTD…ADALARQGMA (142 aa)). Residues Asp12, Glu50, Asp72, and Asp136 each contribute to the Mg(2+) site.

This sequence belongs to the RNase H family. In terms of assembly, monomer. The cofactor is Mg(2+).

The protein resides in the cytoplasm. It carries out the reaction Endonucleolytic cleavage to 5'-phosphomonoester.. Its function is as follows. Endonuclease that specifically degrades the RNA of RNA-DNA hybrids. The sequence is that of Ribonuclease H from Parvibaculum lavamentivorans (strain DS-1 / DSM 13023 / NCIMB 13966).